The primary structure comprises 95 residues: Aspartyl/glutamyl-tRNA(Asn/Gln) amidotransferase subunit C (95 aa).

This sequence belongs to the GatC family. Heterotrimer of A, B and C subunits.

It carries out the reaction L-glutamyl-tRNA(Gln) + L-glutamine + ATP + H2O = L-glutaminyl-tRNA(Gln) + L-glutamate + ADP + phosphate + H(+). It catalyses the reaction L-aspartyl-tRNA(Asn) + L-glutamine + ATP + H2O = L-asparaginyl-tRNA(Asn) + L-glutamate + ADP + phosphate + 2 H(+). Its function is as follows. Allows the formation of correctly charged Asn-tRNA(Asn) or Gln-tRNA(Gln) through the transamidation of misacylated Asp-tRNA(Asn) or Glu-tRNA(Gln) in organisms which lack either or both of asparaginyl-tRNA or glutaminyl-tRNA synthetases. The reaction takes place in the presence of glutamine and ATP through an activated phospho-Asp-tRNA(Asn) or phospho-Glu-tRNA(Gln). This Rhizorhabdus wittichii (strain DSM 6014 / CCUG 31198 / JCM 15750 / NBRC 105917 / EY 4224 / RW1) (Sphingomonas wittichii) protein is Aspartyl/glutamyl-tRNA(Asn/Gln) amidotransferase subunit C.